A 433-amino-acid chain; its full sequence is Small ribosomal subunit biogenesis GTPase RsgA 1, mitochondrial (433 aa).

Residues 1–20 (MLRAKHIGKNYSSSLSPVLS) are disordered. The region spanning 113 to 291 (SEILDPPVAN…LADTPGFNQP (179 aa)) is the CP-type G domain. A GTP-binding site is contributed by 212–220 (GPSGVGKSS). Cys-317, Cys-322, His-324, and Cys-330 together coordinate Zn(2+).

Belongs to the TRAFAC class YlqF/YawG GTPase family. RsgA subfamily. As to quaternary structure, monomer. Associates with 30S ribosomal subunit, binds 16S rRNA. Zn(2+) is required as a cofactor.

The protein resides in the mitochondrion. Its function is as follows. One of several proteins that assist in the late maturation steps of the functional core of the 30S ribosomal subunit. Helps release RbfA from mature subunits. May play a role in the assembly of ribosomal proteins into the subunit. Circularly permuted GTPase that catalyzes slow GTP hydrolysis, GTPase activity is stimulated by the 30S ribosomal subunit. Required for embryo development. The chain is Small ribosomal subunit biogenesis GTPase RsgA 1, mitochondrial from Arabidopsis thaliana (Mouse-ear cress).